A 463-amino-acid polypeptide reads, in one-letter code: Interferon-inducible GTPase 5 (463 aa).

In terms of domain architecture, IRG-type G spans Ile-53 to Asp-235. Residues Glu-62–Ser-69, Thr-87–Glu-91, Lys-169–Asp-171, and Ser-216–Leu-218 contribute to the GTP site. A phosphoserine mark is found at Ser-247 and Ser-304. A disordered region spans residues Leu-404–Pro-437.

It belongs to the TRAFAC class dynamin-like GTPase superfamily. IRG family. In terms of tissue distribution, abundantly expressed in semen (at protein level).

The protein resides in the cell projection. It localises to the cilium. It is found in the flagellum. The protein localises to the lipid droplet. The enzyme catalyses GTP + H2O = GDP + phosphate + H(+). Its function is as follows. Required for sperm motility and therefore male fertility, via positive regulation of spermatozoa fibrous sheath formation. The sequence is that of Interferon-inducible GTPase 5 from Homo sapiens (Human).